A 363-amino-acid chain; its full sequence is Peptide chain release factor 2 (363 aa).

An N5-methylglutamine modification is found at Q251.

The protein belongs to the prokaryotic/mitochondrial release factor family. In terms of processing, methylated by PrmC. Methylation increases the termination efficiency of RF2.

It is found in the cytoplasm. Functionally, peptide chain release factor 2 directs the termination of translation in response to the peptide chain termination codons UGA and UAA. The protein is Peptide chain release factor 2 (prfB) of Helicobacter pylori (strain J99 / ATCC 700824) (Campylobacter pylori J99).